We begin with the raw amino-acid sequence, 749 residues long: Semaphorin-3B (749 aa).

Residues 1–24 form the signal peptide; sequence MGRAGAAAVIPGLALLWAVGLGSA. Positions 30–513 constitute a Sema domain; sequence RLRLSFQELQ…SRSAVAQIAL (484 aa). N-linked (GlcNAc...) asparagine glycosylation is present at Asn82. Cys102 and Cys113 are disulfide-bonded. Residue Asn124 is glycosylated (N-linked (GlcNAc...) asparagine). Disulfide bonds link Cys131-Cys140, Cys269-Cys380, and Cys293-Cys340. Residue Asn427 is glycosylated (N-linked (GlcNAc...) asparagine). 2 disulfide bridges follow: Cys516–Cys534 and Cys644–Cys710. Residues 573-659 form the Ig-like C2-type domain; the sequence is PALLEHKVFG…GFTQPLRRLS (87 aa). Residues 702-749 are disordered; sequence GSANSLRMCRPQPALQSLPLESRRKGRNRRTHAPEPRAERGPRSATHW. Basic and acidic residues predominate over residues 733–743; sequence HAPEPRAERGP.

The protein belongs to the semaphorin family. In terms of tissue distribution, expressed abundantly but differentially in a variety of neural and nonneural tissues.

The protein localises to the secreted. The protein resides in the endoplasmic reticulum. In terms of biological role, inhibits axonal extension by providing local signals to specify territories inaccessible for growing axons. The polypeptide is Semaphorin-3B (SEMA3B) (Homo sapiens (Human)).